A 592-amino-acid polypeptide reads, in one-letter code: Probable 6-phosphofructo-2-kinase C222.13c (592 aa).

Positions 1–80 (MSNTGSARTE…PANDVEKMEV (80 aa)) are disordered. Positions 57-66 (SIFKREELTP) are enriched in basic and acidic residues. ATP is bound at residue 150-157 (GIPATGKS). Active-site residues include Asp235 and Cys266. Position 300 (Arg300) interacts with beta-D-fructose 6-phosphate. Residue His527 is the Proton donor of the active site.

It is found in the cytoplasm. Its subcellular location is the nucleus. It carries out the reaction beta-D-fructose 6-phosphate + ATP = beta-D-fructose 2,6-bisphosphate + ADP + H(+). Its function is as follows. Synthesis of fructose 2,6-bisphosphate. This chain is Probable 6-phosphofructo-2-kinase C222.13c, found in Schizosaccharomyces pombe (strain 972 / ATCC 24843) (Fission yeast).